Consider the following 223-residue polypeptide: N-terminal Xaa-Pro-Lys N-methyltransferase 1 (223 aa).

N-acetylmethionine is present on Met1. Thr2 carries the post-translational modification N-acetylthreonine; in N-terminal Xaa-Pro-Lys N-methyltransferase 1, N-terminally processed. Residues Gly69, Arg74, 91–93, 119–120, and Gln135 contribute to the S-adenosyl-L-methionine site; these read DIT and LQ.

The protein belongs to the methyltransferase superfamily. NTM1 family.

It localises to the nucleus. The enzyme catalyses N-terminal L-alanyl-L-prolyl-L-lysyl-[protein] + 3 S-adenosyl-L-methionine = N-terminal N,N,N-trimethyl-L-alanyl-L-prolyl-L-lysyl-[protein] + 3 S-adenosyl-L-homocysteine + 3 H(+). It catalyses the reaction N-terminal L-seryl-L-prolyl-L-lysyl-[protein] + 3 S-adenosyl-L-methionine = N-terminal N,N,N-trimethyl-L-seryl-L-prolyl-L-lysyl-[protein] + 3 S-adenosyl-L-homocysteine + 3 H(+). It carries out the reaction N-terminal L-prolyl-L-prolyl-L-lysyl-[protein] + 2 S-adenosyl-L-methionine = N-terminal N,N-dimethyl-L-prolyl-L-prolyl-L-lysyl-[protein] + 2 S-adenosyl-L-homocysteine + 2 H(+). Functionally, distributive alpha-N-methyltransferase that methylates the N-terminus of target proteins containing the N-terminal motif [Ala/Gly/Pro/Ser]-Pro-Lys when the initiator Met is cleaved. Specifically catalyzes mono-, di- or tri-methylation of the exposed alpha-amino group of the Ala, Gly or Ser residue in the [Ala/Gly/Ser]-Pro-Lys motif and mono- or di-methylation of Pro in the Pro-Pro-Lys motif. Some of the substrates may be primed by NTMT2-mediated monomethylation. Catalyzes the trimethylation of the N-terminal Gly in CENPA (after removal of Met-1). Responsible for the N-terminal methylation of KLHL31, MYL2, MYL3, RB1, RCC1, RPL23A and SET. Required during mitosis for normal bipolar spindle formation and chromosome segregation via its action on RCC1. This chain is N-terminal Xaa-Pro-Lys N-methyltransferase 1 (NTMT1), found in Homo sapiens (Human).